We begin with the raw amino-acid sequence, 96 residues long: MVEFSHTKKIGSAGRFGSRYGRKIRVRLRDVEIKQKKEYKCPVCAFPKLKRVGTSIWVCDKCGAKIAGGAYTPETGAGKVVTKAIRRVIESKSREI.

A C4-type zinc finger spans residues 41–62 (CPVCAFPKLKRVGTSIWVCDKC).

The protein belongs to the eukaryotic ribosomal protein eL43 family. It depends on Zn(2+) as a cofactor.

This chain is Large ribosomal subunit protein eL43, found in Methanococcus maripaludis (strain C6 / ATCC BAA-1332).